The primary structure comprises 1023 residues: 2-oxoglutarate dehydrogenase complex component E1 (1023 aa).

The N-terminal 40 residues, 1–40 (MFHLRTCAAKLRPLTASQTVKTFSQNRPAAARTFGQIRCY), are a transit peptide targeting the mitochondrion. Lys74 bears the N6-succinyllysine mark. At Ser100 the chain carries Phosphoserine. Ca(2+)-binding residues include His143, Asp156, and Asp158. A thiamine diphosphate-binding site is contributed by Arg312. N6-acetyllysine is present on Lys401. Asp411, Asn444, and Ile446 together coordinate thiamine diphosphate. Residues Asp411, Asn444, and Ile446 each contribute to the Mg(2+) site. Lys534 participates in a covalent cross-link: Glycyl lysine isopeptide (Lys-Gly) (interchain with G-Cter in ubiquitin). Position 564 is an N6-succinyllysine (Lys564). Gln676 is a binding site for thiamine diphosphate. The residue at position 970 (Lys970) is an N6-acetyllysine.

The protein belongs to the alpha-ketoglutarate dehydrogenase family. As to quaternary structure, homodimer. The 2-oxoglutarate dehydrogenase complex is composed of OGDH (2-oxoglutarate dehydrogenase; E1), DLST (dihydrolipoamide succinyltransferase; E2), DLD (dihydrolipoamide dehydrogenase; E3) and the assembly factor KGD4. It contains multiple copies of the three enzymatic components (E1, E2 and E3). In the nucleus, the 2-oxoglutarate dehydrogenase complex associates with KAT2A. Interacts with ABHD11; this interaction maintains the functional lipoylation of the 2-oxoglutarate dehydrogenase complex. Requires thiamine diphosphate as cofactor. The cofactor is Mg(2+).

It is found in the mitochondrion. It localises to the nucleus. The catalysed reaction is N(6)-[(R)-lipoyl]-L-lysyl-[protein] + 2-oxoglutarate + H(+) = N(6)-[(R)-S(8)-succinyldihydrolipoyl]-L-lysyl-[protein] + CO2. Its activity is regulated as follows. Calcium ions and ADP stimulate, whereas ATP and NADH reduce catalytic activity. Functionally, 2-oxoglutarate dehydrogenase (E1o) component of the 2-oxoglutarate dehydrogenase complex (OGDHC). Participates in the first step, rate limiting for the overall conversion of 2-oxoglutarate to succinyl-CoA and CO(2) catalyzed by the whole OGDHC. Catalyzes the irreversible decarboxylation of 2-oxoglutarate (alpha-ketoglutarate) via the thiamine diphosphate (ThDP) cofactor and subsequent transfer of the decarboxylated acyl intermediate on an oxidized dihydrolipoyl group that is covalently amidated to the E2 enzyme (dihydrolipoyllysine-residue succinyltransferase or DLST). Plays a key role in the Krebs (citric acid) cycle, which is a common pathway for oxidation of fuel molecules, including carbohydrates, fatty acids, and amino acids. Can catalyze the decarboxylation of 2-oxoadipate in vitro, but at a much lower rate than 2-oxoglutarate. Mainly active in the mitochondrion. A fraction of the 2-oxoglutarate dehydrogenase complex also localizes in the nucleus and is required for lysine succinylation of histones: associates with KAT2A on chromatin and provides succinyl-CoA to histone succinyltransferase KAT2A. This Bos taurus (Bovine) protein is 2-oxoglutarate dehydrogenase complex component E1.